Here is a 24-residue protein sequence, read N- to C-terminus: Brevinin-1La (24 aa).

A disulfide bridge links Cys18 with Cys24.

In terms of tissue distribution, expressed by the skin glands.

Its subcellular location is the secreted. Its function is as follows. Antibacterial activity against Gram-positive bacterium S.aureus and Gram-negative bacterium E.coli. The protein is Brevinin-1La of Rana luteiventris (Columbia spotted frog).